Reading from the N-terminus, the 492-residue chain is Trehalose-6-phosphate synthase (492 aa).

Arg-25 provides a ligand contact to D-glucose 6-phosphate. 45–46 contacts UDP-alpha-D-glucose; it reads GG. D-glucose 6-phosphate contacts are provided by Tyr-101 and Asp-155. The UDP-alpha-D-glucose site is built by Arg-297 and Lys-302. D-glucose 6-phosphate is bound at residue Arg-335. 400 to 404 contributes to the UDP-alpha-D-glucose binding site; the sequence is LVAKE.

This sequence belongs to the glycosyltransferase 20 family. Homotetramer.

The catalysed reaction is ADP-alpha-D-glucose + D-glucose 6-phosphate = alpha,alpha-trehalose 6-phosphate + ADP + H(+). It catalyses the reaction CDP-alpha-D-glucose + D-glucose 6-phosphate = alpha,alpha-trehalose 6-phosphate + CDP + H(+). The enzyme catalyses GDP-alpha-D-glucose + D-glucose 6-phosphate = alpha,alpha-trehalose 6-phosphate + GDP + H(+). It carries out the reaction TDP-alpha-D-glucose + D-glucose 6-phosphate = 5-methyl-UDP + alpha,alpha-trehalose 6-phosphate + H(+). The catalysed reaction is D-glucose 6-phosphate + UDP-alpha-D-glucose = alpha,alpha-trehalose 6-phosphate + UDP + H(+). It participates in glycan biosynthesis; trehalose biosynthesis. In terms of biological role, probably involved in the osmoprotection via the biosynthesis of trehalose and in the production of glycogen and alpha-glucan via the TreS-Pep2 branch involved in the biosynthesis of maltose-1-phosphate (M1P). Catalyzes the transfer of glucose from UDP-glucose (UDP-Glc) to D-glucose 6-phosphate (Glc-6-P) to form trehalose-6-phosphate. Probably also able to use ADP-Glc, CDP-Glc, GDP-Glc and TDP-Glc as glucosyl donors. This chain is Trehalose-6-phosphate synthase, found in Mycolicibacterium paratuberculosis (strain ATCC BAA-968 / K-10) (Mycobacterium paratuberculosis).